The chain runs to 493 residues: Cobyric acid synthase (493 aa).

Positions 252–441 constitute a GATase cobBQ-type domain; it reads DLKITVIRLP…LHGLLENGPW (190 aa). Residue cysteine 333 is the Nucleophile of the active site. The active site involves histidine 433.

This sequence belongs to the CobB/CobQ family. CobQ subfamily.

It functions in the pathway cofactor biosynthesis; adenosylcobalamin biosynthesis. Catalyzes amidations at positions B, D, E, and G on adenosylcobyrinic A,C-diamide. NH(2) groups are provided by glutamine, and one molecule of ATP is hydrogenolyzed for each amidation. The chain is Cobyric acid synthase from Thermosynechococcus vestitus (strain NIES-2133 / IAM M-273 / BP-1).